A 246-amino-acid chain; its full sequence is Bis(5'-nucleosyl)-tetraphosphatase PrpE [asymmetrical] (246 aa).

The protein belongs to the PrpE family. Ni(2+) is required as a cofactor.

The enzyme catalyses P(1),P(4)-bis(5'-guanosyl) tetraphosphate + H2O = GMP + GTP + 2 H(+). Its function is as follows. Asymmetrically hydrolyzes Ap4p to yield AMP and ATP. The chain is Bis(5'-nucleosyl)-tetraphosphatase PrpE [asymmetrical] from Bacillus cereus (strain B4264).